Consider the following 92-residue polypeptide: Small ribosomal subunit protein uS19 (92 aa).

The protein belongs to the universal ribosomal protein uS19 family.

Its function is as follows. Protein S19 forms a complex with S13 that binds strongly to the 16S ribosomal RNA. The polypeptide is Small ribosomal subunit protein uS19 (Legionella pneumophila (strain Paris)).